The chain runs to 435 residues: 3-phosphoshikimate 1-carboxyvinyltransferase (435 aa).

3-phosphoshikimate contacts are provided by lysine 15, serine 16, and arginine 20. Residue lysine 15 participates in phosphoenolpyruvate binding. Positions 96 and 124 each coordinate phosphoenolpyruvate. Residues serine 169, glutamine 171, threonine 195, aspartate 319, and lysine 346 each contribute to the 3-phosphoshikimate site. Residue glutamine 171 coordinates phosphoenolpyruvate. The active-site Proton acceptor is the aspartate 319. Residues arginine 350 and arginine 394 each contribute to the phosphoenolpyruvate site.

This sequence belongs to the EPSP synthase family. In terms of assembly, monomer.

The protein localises to the cytoplasm. It carries out the reaction 3-phosphoshikimate + phosphoenolpyruvate = 5-O-(1-carboxyvinyl)-3-phosphoshikimate + phosphate. The protein operates within metabolic intermediate biosynthesis; chorismate biosynthesis; chorismate from D-erythrose 4-phosphate and phosphoenolpyruvate: step 6/7. In terms of biological role, catalyzes the transfer of the enolpyruvyl moiety of phosphoenolpyruvate (PEP) to the 5-hydroxyl of shikimate-3-phosphate (S3P) to produce enolpyruvyl shikimate-3-phosphate and inorganic phosphate. This is 3-phosphoshikimate 1-carboxyvinyltransferase from Chloroherpeton thalassium (strain ATCC 35110 / GB-78).